A 166-amino-acid polypeptide reads, in one-letter code: Small ribosomal subunit protein uS5 (166 aa).

Residues 11–74 (LQEKLIAVNR…EKARRNMINV (64 aa)) enclose the S5 DRBM domain.

It belongs to the universal ribosomal protein uS5 family. As to quaternary structure, part of the 30S ribosomal subunit. Contacts proteins S4 and S8.

With S4 and S12 plays an important role in translational accuracy. In terms of biological role, located at the back of the 30S subunit body where it stabilizes the conformation of the head with respect to the body. The sequence is that of Small ribosomal subunit protein uS5 from Actinobacillus pleuropneumoniae serotype 5b (strain L20).